The sequence spans 312 residues: Ribonuclease HIII (312 aa).

The RNase H type-2 domain maps to 95–312 (MSILGSDEVG…TEKAFRLLKK (218 aa)). A divalent metal cation-binding residues include aspartate 101, glutamate 102, and aspartate 206.

Belongs to the RNase HII family. RnhC subfamily. Mn(2+) serves as cofactor. The cofactor is Mg(2+).

The protein localises to the cytoplasm. It carries out the reaction Endonucleolytic cleavage to 5'-phosphomonoester.. Endonuclease that specifically degrades the RNA of RNA-DNA hybrids. The protein is Ribonuclease HIII of Bacillus mycoides (strain KBAB4) (Bacillus weihenstephanensis).